The primary structure comprises 356 residues: Deoxyribonuclease-2-beta (356 aa).

An N-terminal signal peptide occupies residues M1–G22. N-linked (GlcNAc...) asparagine glycosylation is found at N77, N98, N114, and N273.

This sequence belongs to the DNase II family. Liver specific.

Its subcellular location is the lysosome. It catalyses the reaction Endonucleolytic cleavage to nucleoside 3'-phosphates and 3'-phosphooligonucleotide end-products.. In terms of biological role, hydrolyzes DNA under acidic conditions. Does not require divalent cations for activity. Participates in the degradation of nuclear DNA during lens cell differentiation. This Rattus norvegicus (Rat) protein is Deoxyribonuclease-2-beta (Dnase2b).